The chain runs to 123 residues: Anti-lipopolysaccharide factor (123 aa).

Positions 1–26 (MRTRVMAGLCVALVVMCLYMPQPCEA) are cleaved as a signal peptide. An intrachain disulfide couples Cys55 to Cys76.

As to expression, strong expression in hemocytes, heart and muscle, with weaker expression detected in gills and hepatopancreas. No expression detected in eyes.

Its subcellular location is the secreted. In terms of biological role, binds to bacterial LPS and may specifically inhibit the LPS-mediated activation of the hemolymph coagulation. It has a strong antibacterial effect especially on the growth of Gram-negative bacteria. This is Anti-lipopolysaccharide factor from Scylla serrata (Mud crab).